A 327-amino-acid polypeptide reads, in one-letter code: D-alanine--D-alanine ligase (327 aa).

In terms of domain architecture, ATP-grasp spans 113-312; the sequence is KRLWMTHGLA…YEDFVMQVLA (200 aa). An ATP-binding site is contributed by 139 to 194; it reads VADLGLPLIVKPAREGSSIGLTKVIAADQMRAAFEKAAGLDADVIAETFIDGAELT. Residues Asp-266, Glu-279, and Asn-281 each coordinate Mg(2+).

It belongs to the D-alanine--D-alanine ligase family. The cofactor is Mg(2+). Mn(2+) is required as a cofactor.

It is found in the cytoplasm. The enzyme catalyses 2 D-alanine + ATP = D-alanyl-D-alanine + ADP + phosphate + H(+). The protein operates within cell wall biogenesis; peptidoglycan biosynthesis. In terms of biological role, cell wall formation. This Cupriavidus metallidurans (strain ATCC 43123 / DSM 2839 / NBRC 102507 / CH34) (Ralstonia metallidurans) protein is D-alanine--D-alanine ligase.